A 45-amino-acid chain; its full sequence is DNA-directed RNA polymerase subunit Rpo12 (45 aa).

Zn(2+)-binding residues include Cys8, Cys23, and Cys26.

This sequence belongs to the archaeal Rpo12/eukaryotic RPC10 RNA polymerase subunit family. In terms of assembly, part of the RNA polymerase complex. Zn(2+) serves as cofactor.

Its subcellular location is the cytoplasm. The enzyme catalyses RNA(n) + a ribonucleoside 5'-triphosphate = RNA(n+1) + diphosphate. DNA-dependent RNA polymerase (RNAP) catalyzes the transcription of DNA into RNA using the four ribonucleoside triphosphates as substrates. The sequence is that of DNA-directed RNA polymerase subunit Rpo12 from Methanothrix thermoacetophila (strain DSM 6194 / JCM 14653 / NBRC 101360 / PT) (Methanosaeta thermophila).